A 222-amino-acid polypeptide reads, in one-letter code: Pyridoxine/pyridoxamine 5'-phosphate oxidase (222 aa).

Residues 16–19 and Lys75 contribute to the substrate site; that span reads RVSY. FMN-binding positions include 70 to 75, 85 to 86, Lys92, and Gln114; these read RTVLCK and FT. Substrate-binding residues include Tyr132, Arg136, and Ser140. FMN contacts are provided by residues 149 to 150 and Trp195; that span reads QS. 201-203 contributes to the substrate binding site; it reads RLH. Arg205 is a binding site for FMN.

It belongs to the pyridoxamine 5'-phosphate oxidase family. In terms of assembly, homodimer. It depends on FMN as a cofactor.

It catalyses the reaction pyridoxamine 5'-phosphate + O2 + H2O = pyridoxal 5'-phosphate + H2O2 + NH4(+). The enzyme catalyses pyridoxine 5'-phosphate + O2 = pyridoxal 5'-phosphate + H2O2. It functions in the pathway cofactor metabolism; pyridoxal 5'-phosphate salvage; pyridoxal 5'-phosphate from pyridoxamine 5'-phosphate: step 1/1. It participates in cofactor metabolism; pyridoxal 5'-phosphate salvage; pyridoxal 5'-phosphate from pyridoxine 5'-phosphate: step 1/1. Functionally, catalyzes the oxidation of either pyridoxine 5'-phosphate (PNP) or pyridoxamine 5'-phosphate (PMP) into pyridoxal 5'-phosphate (PLP). The chain is Pyridoxine/pyridoxamine 5'-phosphate oxidase from Saccharopolyspora erythraea (strain ATCC 11635 / DSM 40517 / JCM 4748 / NBRC 13426 / NCIMB 8594 / NRRL 2338).